Reading from the N-terminus, the 296-residue chain is Remorin 4.1 (296 aa).

Disordered regions lie at residues 1–78, 121–142, and 242–266; these read MLTL…SGEN, TRIG…DSNP, and EKTQ…EGKR. The span at 21–39 shows a compositional bias: basic and acidic residues; it reads ASDRRDETPSSEIVVRDIH. Composition is skewed to polar residues over residues 41 to 53 and 62 to 78; these read MTTT…PQQR and PSRS…SGEN. 2 stretches are compositionally biased toward basic and acidic residues: residues 121–135 and 253–266; these read TRIG…HGQV and RKAE…EGKR. A coiled-coil region spans residues 226-261; sequence MKKIERKLEDRRAKAMEKTQNKVAKAQRKAEERRAT.

It belongs to the remorin family. In terms of assembly, forms homodimer and heterodimer with REM4.2. Interacts with KIN11. In terms of processing, phosphorylated by KIN11. Probably ubiquitinated and degraded by the 26S proteasome pathway. As to expression, predominantly detected in bud, stem, root, flower, silique, and leaves, and enhanced dramatically in senescence leaf.

The protein localises to the cell membrane. Collaborates with REM4.2 to positively regulate the BCTV and BSCTV susceptibility. The sequence is that of Remorin 4.1 from Arabidopsis thaliana (Mouse-ear cress).